The sequence spans 736 residues: Peroxisomal multifunctional enzyme type 2 (736 aa).

Residues 1–305 (MGSPLRFDGR…IEVLSKIDSE (305 aa)) form a (3R)-hydroxyacyl-CoA dehydrogenase region. NAD(+) contacts are provided by residues 13–37 (LVTG…ALVV), Leu21, and Asp40. Lys46 carries the N6-acetyllysine; alternate modification. Position 46 is an N6-succinyllysine; alternate (Lys46). The residue at position 52 (Ser52) is a Phosphoserine. An N6-succinyllysine mark is found at Lys57 and Lys68. 75 to 76 (SV) is a binding site for NAD(+). N6-succinyllysine is present on Lys84. An NAD(+)-binding site is contributed by Asn99. Substrate is bound at residue Ser151. Tyr164 acts as the Proton acceptor in catalysis. NAD(+) is bound by residues 164–168 (YSAAK) and 196–199 (AGSR). Thr265 carries the post-translational modification Phosphothreonine. Lys275 bears the N6-succinyllysine mark. 2 positions are modified to phosphoserine: Ser304 and Ser309. The interval 322-622 (SGFAGAIGQK…AKTPSEGGKL (301 aa)) is enoyl-CoA hydratase 2. N6-succinyllysine is present on Lys356. 406 to 407 (HG) lines the (3R)-3-hydroxydecanoyl-CoA pocket. N6-succinyllysine is present on Lys424. Residues Lys435, 510 to 515 (DWNPLH), Gly533, and Phe563 contribute to the (3R)-3-hydroxydecanoyl-CoA site. The region spanning 484 to 600 (IPNRPPDAVL…QETGDIVISN (117 aa)) is the MaoC-like domain. N6-acetyllysine is present on Lys565. An N6-succinyllysine mark is found at Lys579 and Lys663. Residues 624–736 (STFVFEEIGR…QMILKDYAKL (113 aa)) enclose the SCP2 domain. Residue Lys669 is modified to N6-acetyllysine. Residue Gln706 coordinates substrate. Position 707 is an N6-acetyllysine (Lys707). Residue Gln724 coordinates substrate. Lys725 bears the N6-succinyllysine mark. Residues 734–736 (AKL) carry the Microbody targeting signal motif.

Belongs to the short-chain dehydrogenases/reductases (SDR) family. Homodimer. Present in many tissues with highest concentrations in liver, heart, prostate and testis.

It is found in the peroxisome. The enzyme catalyses a (3R)-3-hydroxyacyl-CoA + NAD(+) = a 3-oxoacyl-CoA + NADH + H(+). It carries out the reaction a (3R)-3-hydroxyacyl-CoA = a (2E)-enoyl-CoA + H2O. The catalysed reaction is (24R,25R)-3alpha,7alpha,12alpha,24-tetrahydroxy-5beta-cholestan-26-oyl-CoA = (24E)-3alpha,7alpha,12alpha-trihydroxy-5beta-cholest-24-en-26-oyl-CoA + H2O. It catalyses the reaction (2E)-octenoyl-CoA + H2O = (3R)-hydroxyoctanoyl-CoA. The enzyme catalyses (3R)-hydroxyoctanoyl-CoA + NAD(+) = 3-oxooctanoyl-CoA + NADH + H(+). It carries out the reaction (3R)-hydroxyhexadecanoyl-CoA + NAD(+) = 3-oxohexadecanoyl-CoA + NADH + H(+). The catalysed reaction is (2E)-hexadecenedioyl-CoA + H2O = (3R)-hydroxyhexadecanedioyl-CoA. It catalyses the reaction (3R)-hydroxyhexadecanedioyl-CoA + NAD(+) = 3-oxohexadecanedioyl-CoA + NADH + H(+). The enzyme catalyses (3R)-hydroxyhexadecanoyl-CoA = (2E)-hexadecenoyl-CoA + H2O. It carries out the reaction (3R)-3-hydroxydecanoyl-CoA = (2E)-decenoyl-CoA + H2O. The catalysed reaction is (3R)-3-hydroxydecanoyl-CoA + NAD(+) = 3-oxodecanoyl-CoA + NADH + H(+). It catalyses the reaction (24R,25R)-3alpha,7alpha,12alpha,24-tetrahydroxy-5beta-cholestan-26-oyl-CoA + NAD(+) = 3alpha,7alpha,12alpha-trihydroxy-24-oxo-5beta-cholestan-26-oyl-CoA + NADH + H(+). The protein operates within lipid metabolism; fatty acid beta-oxidation. Bifunctional enzyme acting on the peroxisomal fatty acid beta-oxidation pathway. Catalyzes two of the four reactions in fatty acid degradation: hydration of 2-enoyl-CoA (trans-2-enoyl-CoA) to produce (3R)-3-hydroxyacyl-CoA, and dehydrogenation of (3R)-3-hydroxyacyl-CoA to produce 3-ketoacyl-CoA (3-oxoacyl-CoA), which is further metabolized by SCPx. Can use straight-chain and branched-chain fatty acids, as well as bile acid intermediates as substrates. The polypeptide is Peroxisomal multifunctional enzyme type 2 (Homo sapiens (Human)).